Reading from the N-terminus, the 149-residue chain is Transcriptional repressor NrdR (149 aa).

A zinc finger spans residues 3–34 (CPYCSYEESKVVDSRSAEDYNAIRRRRECLRC). Residues 49 to 139 (ILVIKKDLSR…VYRQFKDINT (91 aa)) enclose the ATP-cone domain.

It belongs to the NrdR family. It depends on Zn(2+) as a cofactor.

Its function is as follows. Negatively regulates transcription of bacterial ribonucleotide reductase nrd genes and operons by binding to NrdR-boxes. The chain is Transcriptional repressor NrdR from Clostridium perfringens (strain ATCC 13124 / DSM 756 / JCM 1290 / NCIMB 6125 / NCTC 8237 / Type A).